Consider the following 152-residue polypeptide: SsrA-binding protein (152 aa).

Belongs to the SmpB family.

The protein resides in the cytoplasm. In terms of biological role, required for rescue of stalled ribosomes mediated by trans-translation. Binds to transfer-messenger RNA (tmRNA), required for stable association of tmRNA with ribosomes. tmRNA and SmpB together mimic tRNA shape, replacing the anticodon stem-loop with SmpB. tmRNA is encoded by the ssrA gene; the 2 termini fold to resemble tRNA(Ala) and it encodes a 'tag peptide', a short internal open reading frame. During trans-translation Ala-aminoacylated tmRNA acts like a tRNA, entering the A-site of stalled ribosomes, displacing the stalled mRNA. The ribosome then switches to translate the ORF on the tmRNA; the nascent peptide is terminated with the 'tag peptide' encoded by the tmRNA and targeted for degradation. The ribosome is freed to recommence translation, which seems to be the essential function of trans-translation. The polypeptide is SsrA-binding protein (Rickettsia montanensis).